The chain runs to 631 residues: Golgin subfamily A member 8R (631 aa).

The segment at 1–72 (MAEETQHNKL…REGPTSSATL (72 aa)) is disordered. Residues 38-50 (TNGSIPETATSGG) show a composition bias toward polar residues. Coiled-coil stretches lie at residues 85 to 149 (VLDS…NTDL), 209 to 247 (ELEQ…HIEG), and 303 to 419 (SEVE…LSLM). Disordered stretches follow at residues 422–451 (PGEG…DPES), 502–523 (AKDA…DEGE), and 551–610 (NSAD…QEHP). The segment covering 507–519 (LGGGHHQAGAQGG) has biased composition (gly residues). The span at 568 to 577 (AADKHGDLRE) shows a compositional bias: basic and acidic residues.

Belongs to the GOLGA8 family.

The protein is Golgin subfamily A member 8R of Homo sapiens (Human).